The primary structure comprises 283 residues: Cell differentiation protein rcd1 (283 aa).

This sequence belongs to the CNOT9 family.

In terms of biological role, a differentiation-controlling factor that is essential for the onset of sexual development. Induces ste11 when sexual development is invoked through nitrogen starvation. The polypeptide is Cell differentiation protein rcd1 (rcd1) (Schizosaccharomyces pombe (strain 972 / ATCC 24843) (Fission yeast)).